A 215-amino-acid polypeptide reads, in one-letter code: Probable phosphoglycerate mutase GpmB (215 aa).

Substrate contacts are provided by residues Arg8 to Asn15, Gln21 to Gly22, Arg58, Arg60, Glu82 to Met85, Arg104 to Arg105, and Gly151 to Ile152. The active-site Tele-phosphohistidine intermediate is the His9. Glu82 acts as the Proton donor/acceptor in catalysis.

It belongs to the phosphoglycerate mutase family. GpmB subfamily.

The enzyme catalyses (2R)-2-phosphoglycerate = (2R)-3-phosphoglycerate. It functions in the pathway carbohydrate degradation; glycolysis; pyruvate from D-glyceraldehyde 3-phosphate: step 3/5. In Citrobacter koseri (strain ATCC BAA-895 / CDC 4225-83 / SGSC4696), this protein is Probable phosphoglycerate mutase GpmB.